Reading from the N-terminus, the 452-residue chain is Protein disulfide-isomerase TMX3 (452 aa).

The signal sequence occupies residues 1 to 26 (MAAAGLCFILAIVSSTSLLASVPVSA). A Thioredoxin domain is found at 27–128 (LVEDLDDSFK…KEDIVEFANR (102 aa)). At 27 to 375 (LVEDLDDSFK…TVVSVFKSSP (349 aa)) the chain is on the lumenal side. Catalysis depends on nucleophile residues C53 and C56. A disulfide bridge connects residues C53 and C56. 2 N-linked (GlcNAc...) asparagine glycosylation sites follow: N258 and N313. Residues 376-396 (LLGCFLFGLPLGVISIMCYGI) form a helical membrane-spanning segment. At 397–452 (CTADTEDGSEEMTRKDVIDQNASDEGSDEEEEKGREITDVSDEDQQEKDFMEKKID) the chain is on the cytoplasmic side. Residues 405–452 (SEEMTRKDVIDQNASDEGSDEEEEKGREITDVSDEDQQEKDFMEKKID) form a disordered region. The segment covering 443–452 (EKDFMEKKID) has biased composition (basic and acidic residues). The Di-lysine motif signature appears at 449–452 (KKID).

This sequence belongs to the protein disulfide isomerase family.

The protein resides in the endoplasmic reticulum membrane. The catalysed reaction is Catalyzes the rearrangement of -S-S- bonds in proteins.. Probable disulfide isomerase, which participates in the folding of proteins containing disulfide bonds. May act as a dithiol oxidase. Acts as a regulator of endoplasmic reticulum-mitochondria contact sites via its ability to regulate redox signals. In Xenopus laevis (African clawed frog), this protein is Protein disulfide-isomerase TMX3 (tmx3).